The primary structure comprises 103 residues: Large ribosomal subunit protein bL21 (103 aa).

The protein belongs to the bacterial ribosomal protein bL21 family. As to quaternary structure, part of the 50S ribosomal subunit. Contacts protein L20.

Its function is as follows. This protein binds to 23S rRNA in the presence of protein L20. This is Large ribosomal subunit protein bL21 from Herminiimonas arsenicoxydans.